We begin with the raw amino-acid sequence, 321 residues long: MIRAAIKGSGSALPRKVVTNEELAARVDTSDEWIVERTGIRQRYIAGADEFTSTLAMEASRKALEAAGITPETIDLIVLATATPDNTFPATATKVQEALGCNGCIAFDVQAVCSGFLYALATADSLLKTGMAKRALVIGAETFSRILDWEDRTTCVLFGDGAGAVVLEAAEGDTEAPGILASRLHADGAQHDLLYVDGGPSTTQTVGHLRMRGREVFRHAVVNLADVLKEVLDDAGVSASDIDWVVPHQANARILDATARKLGLPMEKIVVTVDRHANTSAASVPLAFDTAVRDGRIKPGDLVMFEAMGGGFTWGASLVRY.

Active-site residues include Cys113 and His248. An ACP-binding region spans residues 249 to 253 (QANAR). Asn278 is an active-site residue.

Belongs to the thiolase-like superfamily. FabH family. In terms of assembly, homodimer.

Its subcellular location is the cytoplasm. The catalysed reaction is malonyl-[ACP] + acetyl-CoA + H(+) = 3-oxobutanoyl-[ACP] + CO2 + CoA. It functions in the pathway lipid metabolism; fatty acid biosynthesis. Catalyzes the condensation reaction of fatty acid synthesis by the addition to an acyl acceptor of two carbons from malonyl-ACP. Catalyzes the first condensation reaction which initiates fatty acid synthesis and may therefore play a role in governing the total rate of fatty acid production. Possesses both acetoacetyl-ACP synthase and acetyl transacylase activities. Its substrate specificity determines the biosynthesis of branched-chain and/or straight-chain of fatty acids. The polypeptide is Beta-ketoacyl-[acyl-carrier-protein] synthase III (Erythrobacter litoralis (strain HTCC2594)).